The chain runs to 200 residues: Holliday junction branch migration complex subunit RuvA (200 aa).

Positions 1-64 (MFTYFRGELI…EDLMQLFGFL (64 aa)) are domain I. A domain II region spans residues 65-143 (EEEERQLFRL…KLRPSGGTKS (79 aa)). The interval 144–148 (VSRLS) is flexible linker. The tract at residues 148 to 200 (SESSMRDDAVNALVTLGFLRSVAQKAVTESLTSLRNPQVEDLVRDALLTIRTP) is domain III.

The protein belongs to the RuvA family. Homotetramer. Forms an RuvA(8)-RuvB(12)-Holliday junction (HJ) complex. HJ DNA is sandwiched between 2 RuvA tetramers; dsDNA enters through RuvA and exits via RuvB. An RuvB hexamer assembles on each DNA strand where it exits the tetramer. Each RuvB hexamer is contacted by two RuvA subunits (via domain III) on 2 adjacent RuvB subunits; this complex drives branch migration. In the full resolvosome a probable DNA-RuvA(4)-RuvB(12)-RuvC(2) complex forms which resolves the HJ.

The protein localises to the cytoplasm. The RuvA-RuvB-RuvC complex processes Holliday junction (HJ) DNA during genetic recombination and DNA repair, while the RuvA-RuvB complex plays an important role in the rescue of blocked DNA replication forks via replication fork reversal (RFR). RuvA specifically binds to HJ cruciform DNA, conferring on it an open structure. The RuvB hexamer acts as an ATP-dependent pump, pulling dsDNA into and through the RuvAB complex. HJ branch migration allows RuvC to scan DNA until it finds its consensus sequence, where it cleaves and resolves the cruciform DNA. In Chlorobium phaeobacteroides (strain BS1), this protein is Holliday junction branch migration complex subunit RuvA.